The sequence spans 209 residues: LexA repressor (209 aa).

A DNA-binding region (H-T-H motif) is located at residues 28-48 (RVELAKILGFRSANAAEEHLK). Active-site for autocatalytic cleavage activity residues include Ser-126 and Lys-163.

It belongs to the peptidase S24 family. In terms of assembly, homodimer.

It carries out the reaction Hydrolysis of Ala-|-Gly bond in repressor LexA.. Its function is as follows. Represses a number of genes involved in the response to DNA damage (SOS response), including recA and lexA. In the presence of single-stranded DNA, RecA interacts with LexA causing an autocatalytic cleavage which disrupts the DNA-binding part of LexA, leading to derepression of the SOS regulon and eventually DNA repair. In Psychromonas ingrahamii (strain DSM 17664 / CCUG 51855 / 37), this protein is LexA repressor.